Consider the following 121-residue polypeptide: Large ribosomal subunit protein bL20 (121 aa).

It belongs to the bacterial ribosomal protein bL20 family.

In terms of biological role, binds directly to 23S ribosomal RNA and is necessary for the in vitro assembly process of the 50S ribosomal subunit. It is not involved in the protein synthesizing functions of that subunit. The sequence is that of Large ribosomal subunit protein bL20 from Ruegeria sp. (strain TM1040) (Silicibacter sp.).